The sequence spans 393 residues: MAVIKMTDLDLKGKRVLLREDLNVPLKEGRITSDKRIRAALPSIRMAMEAGGRVLIVSHLGRPVEGEFDEAFSLAPVAAHLSRELGRDVRLVKDYIDGVDVAEGDCVLCENVRFLKGEKKNTEELGRRLAALCDIFVMDAFGAAHRAQASTHAVARFAPVACAGPLLAAELDALERALDAPKHPLVGIIGGSKVSTKLTLLDNLSHRVDRLIVGGGIANNFIKAAGYEVGKSLYEPELVEEAARLMAAARAAGGEIPVPLDVVVGPELADGAPATVRKVSEVGPDEMILDIGPATAALYREILLAAGTIVWNGPVGAFEWEQFGAGTRALCEAVADSPAFSIAGGGDTVAAVEKYGVASRVGYISTGGGAFLEFLEGKELPAVAILQERAAQS.

Residues 21 to 23 (DLN), arginine 36, 59 to 62 (HLGR), arginine 113, and arginine 146 each bind substrate. Residues lysine 197, glutamate 319, and 345–348 (GGDT) contribute to the ATP site.

It belongs to the phosphoglycerate kinase family. As to quaternary structure, monomer.

It localises to the cytoplasm. The catalysed reaction is (2R)-3-phosphoglycerate + ATP = (2R)-3-phospho-glyceroyl phosphate + ADP. It participates in carbohydrate degradation; glycolysis; pyruvate from D-glyceraldehyde 3-phosphate: step 2/5. This chain is Phosphoglycerate kinase, found in Nitratidesulfovibrio vulgaris (strain DP4) (Desulfovibrio vulgaris).